Reading from the N-terminus, the 35-residue chain is Thaumatin-like protein 6 (35 aa).

It belongs to the thaumatin family.

The sequence is that of Thaumatin-like protein 6 from Glebionis coronaria (Crown daisy).